The sequence spans 539 residues: O-phosphoserine--tRNA(Cys) ligase (539 aa).

Residues 188-190, 233-235, 275-276, and Asn-327 contribute to the substrate site; these read HMT, SAS, and YY.

Belongs to the class-II aminoacyl-tRNA synthetase family. O-phosphoseryl-tRNA(Cys) synthetase subfamily. In terms of assembly, homotetramer. Interacts with SepCysS.

It catalyses the reaction tRNA(Cys) + O-phospho-L-serine + ATP = O-phospho-L-seryl-tRNA(Cys) + AMP + diphosphate. In terms of biological role, catalyzes the attachment of O-phosphoserine (Sep) to tRNA(Cys). The chain is O-phosphoserine--tRNA(Cys) ligase from Methanosarcina mazei (strain ATCC BAA-159 / DSM 3647 / Goe1 / Go1 / JCM 11833 / OCM 88) (Methanosarcina frisia).